Reading from the N-terminus, the 135-residue chain is Large ribosomal subunit protein uL16 (135 aa).

The protein belongs to the universal ribosomal protein uL16 family. As to quaternary structure, part of the 50S ribosomal subunit.

In terms of biological role, binds 23S rRNA and is also seen to make contacts with the A and possibly P site tRNAs. This chain is Large ribosomal subunit protein uL16, found in Desulforapulum autotrophicum (strain ATCC 43914 / DSM 3382 / VKM B-1955 / HRM2) (Desulfobacterium autotrophicum).